The primary structure comprises 336 residues: Dihydroorotate dehydrogenase (quinone) (336 aa).

Residues Ala62–Lys66 and Thr86 each bind FMN. Lys66 serves as a coordination point for substrate. Asn111–Phe115 contacts substrate. Asn139 and Asn172 together coordinate FMN. Asn172 contributes to the substrate binding site. The Nucleophile role is filled by Ser175. Residue Asn177 coordinates substrate. 2 residues coordinate FMN: Lys217 and Thr245. Position 246-247 (Asn246–Thr247) interacts with substrate. FMN is bound by residues Gly268, Gly297, and Tyr318–Ser319.

It belongs to the dihydroorotate dehydrogenase family. Type 2 subfamily. As to quaternary structure, monomer. The cofactor is FMN.

Its subcellular location is the cell membrane. It catalyses the reaction (S)-dihydroorotate + a quinone = orotate + a quinol. The protein operates within pyrimidine metabolism; UMP biosynthesis via de novo pathway; orotate from (S)-dihydroorotate (quinone route): step 1/1. Its function is as follows. Catalyzes the conversion of dihydroorotate to orotate with quinone as electron acceptor. The sequence is that of Dihydroorotate dehydrogenase (quinone) from Salmonella gallinarum (strain 287/91 / NCTC 13346).